Reading from the N-terminus, the 129-residue chain is Copper chaperone GriE (129 aa).

Residues 1–37 (MPMNRREMVMATTGAALAAAAAVPLLSGGEGEGAAEA) constitute a signal peptide (tat-type signal). The tract at residues 32-51 (EGAAEAAAAPAKATGRGREH) is disordered. Residues 34 to 45 (AAEAAAAPAKAT) show a composition bias toward low complexity.

Belongs to the melC1 family. Predicted to be exported by the Tat system. The position of the signal peptide cleavage has not been experimentally proven.

Its function is as follows. Involved in the transfer of Cu(2+) ions to the apo form of o-aminophenol oxidase GriF in the grixazone biosynthetic pathway. This is Copper chaperone GriE (griE) from Streptomyces griseus subsp. griseus (strain JCM 4626 / CBS 651.72 / NBRC 13350 / KCC S-0626 / ISP 5235).